Reading from the N-terminus, the 715-residue chain is Polyribonucleotide nucleotidyltransferase (715 aa).

Mg(2+) contacts are provided by Asp485 and Asp491. The KH domain occupies 552-611 (PRIHTMKIDPKKIKDVIGKGGAVIRALTEETGTSIDIDDDGTVKIAATDNNAAKAVMARI). Residues 621-689 (NAIYKGKVTR…RQNRIRLTMK (69 aa)) form the S1 motif domain. The tract at residues 695–715 (TPVAENVTEEAEVSSEQQAEI) is disordered.

It belongs to the polyribonucleotide nucleotidyltransferase family. Component of the RNA degradosome, which is a multiprotein complex involved in RNA processing and mRNA degradation. The cofactor is Mg(2+).

Its subcellular location is the cytoplasm. The catalysed reaction is RNA(n+1) + phosphate = RNA(n) + a ribonucleoside 5'-diphosphate. Involved in mRNA degradation. Catalyzes the phosphorolysis of single-stranded polyribonucleotides processively in the 3'- to 5'-direction. This chain is Polyribonucleotide nucleotidyltransferase, found in Actinobacillus pleuropneumoniae serotype 7 (strain AP76).